Here is a 500-residue protein sequence, read N- to C-terminus: UDP-N-acetylmuramoyl-L-alanyl-D-glutamate--2,6-diaminopimelate ligase (500 aa).

Residues L26, S28, and H43 to V45 contribute to the UDP-N-acetyl-alpha-D-muramoyl-L-alanyl-D-glutamate site. G123–T129 provides a ligand contact to ATP. UDP-N-acetyl-alpha-D-muramoyl-L-alanyl-D-glutamate is bound by residues N164, T165–T166, S192, Q198, and R200. Residue K232 is modified to N6-carboxylysine. Meso-2,6-diaminopimelate is bound by residues R399, D423–R426, G474, and E478. The short motif at D423–R426 is the Meso-diaminopimelate recognition motif element.

This sequence belongs to the MurCDEF family. MurE subfamily. Mg(2+) is required as a cofactor. In terms of processing, carboxylation is probably crucial for Mg(2+) binding and, consequently, for the gamma-phosphate positioning of ATP.

It localises to the cytoplasm. The enzyme catalyses UDP-N-acetyl-alpha-D-muramoyl-L-alanyl-D-glutamate + meso-2,6-diaminopimelate + ATP = UDP-N-acetyl-alpha-D-muramoyl-L-alanyl-gamma-D-glutamyl-meso-2,6-diaminopimelate + ADP + phosphate + H(+). The protein operates within cell wall biogenesis; peptidoglycan biosynthesis. Catalyzes the addition of meso-diaminopimelic acid to the nucleotide precursor UDP-N-acetylmuramoyl-L-alanyl-D-glutamate (UMAG) in the biosynthesis of bacterial cell-wall peptidoglycan. This Actinobacillus pleuropneumoniae serotype 5b (strain L20) protein is UDP-N-acetylmuramoyl-L-alanyl-D-glutamate--2,6-diaminopimelate ligase.